Here is a 216-residue protein sequence, read N- to C-terminus: DNA-directed RNA polymerase subunit alpha (216 aa).

Belongs to the RNA polymerase alpha chain family. In plastids the minimal PEP RNA polymerase catalytic core is composed of four subunits: alpha, beta, beta', and beta''. When a (nuclear-encoded) sigma factor is associated with the core the holoenzyme is formed, which can initiate transcription.

The protein localises to the plastid. It localises to the chloroplast. The catalysed reaction is RNA(n) + a ribonucleoside 5'-triphosphate = RNA(n+1) + diphosphate. DNA-dependent RNA polymerase catalyzes the transcription of DNA into RNA using the four ribonucleoside triphosphates as substrates. The polypeptide is DNA-directed RNA polymerase subunit alpha (rpoA) (Euglena gracilis).